We begin with the raw amino-acid sequence, 248 residues long: Uridylate kinase (248 aa).

K15–G18 contributes to the ATP binding site. Residues G23 to G28 are involved in allosteric activation by GTP. Position 57 (G57) interacts with UMP. ATP contacts are provided by G58 and R62. Residues D77 and T138 to T145 each bind UMP. Residues T165, Y171, and D174 each contribute to the ATP site.

Belongs to the UMP kinase family. As to quaternary structure, homohexamer.

It localises to the cytoplasm. The catalysed reaction is UMP + ATP = UDP + ADP. It participates in pyrimidine metabolism; CTP biosynthesis via de novo pathway; UDP from UMP (UMPK route): step 1/1. With respect to regulation, allosterically activated by GTP. Inhibited by UTP. Catalyzes the reversible phosphorylation of UMP to UDP. The protein is Uridylate kinase of Yersinia enterocolitica serotype O:8 / biotype 1B (strain NCTC 13174 / 8081).